The following is a 366-amino-acid chain: tRNA/tmRNA (uracil-C(5))-methyltransferase (366 aa).

Residues glutamine 190, tyrosine 218, asparagine 223, glutamate 239, and aspartate 299 each contribute to the S-adenosyl-L-methionine site. Cysteine 324 (nucleophile) is an active-site residue. Catalysis depends on glutamate 358, which acts as the Proton acceptor.

Belongs to the class I-like SAM-binding methyltransferase superfamily. RNA M5U methyltransferase family. TrmA subfamily.

It carries out the reaction uridine(54) in tRNA + S-adenosyl-L-methionine = 5-methyluridine(54) in tRNA + S-adenosyl-L-homocysteine + H(+). It catalyses the reaction uridine(341) in tmRNA + S-adenosyl-L-methionine = 5-methyluridine(341) in tmRNA + S-adenosyl-L-homocysteine + H(+). Functionally, dual-specificity methyltransferase that catalyzes the formation of 5-methyluridine at position 54 (m5U54) in all tRNAs, and that of position 341 (m5U341) in tmRNA (transfer-mRNA). This Escherichia coli (strain ATCC 8739 / DSM 1576 / NBRC 3972 / NCIMB 8545 / WDCM 00012 / Crooks) protein is tRNA/tmRNA (uracil-C(5))-methyltransferase.